We begin with the raw amino-acid sequence, 152 residues long: Lipoprotein signal peptidase (152 aa).

3 helical membrane passes run 5–25, 61–81, and 84–104; these read LFVL…FWIV, WFFV…LATH, and LNIW…GNFI. Catalysis depends on residues Asp114 and Asp130. The helical transmembrane segment at 125 to 145 threads the bilayer; that stretch reads IFNVADSYLTVGVILLVICLW.

This sequence belongs to the peptidase A8 family.

The protein localises to the cell membrane. The catalysed reaction is Release of signal peptides from bacterial membrane prolipoproteins. Hydrolyzes -Xaa-Yaa-Zaa-|-(S,diacylglyceryl)Cys-, in which Xaa is hydrophobic (preferably Leu), and Yaa (Ala or Ser) and Zaa (Gly or Ala) have small, neutral side chains.. It participates in protein modification; lipoprotein biosynthesis (signal peptide cleavage). Functionally, this protein specifically catalyzes the removal of signal peptides from prolipoproteins. This is Lipoprotein signal peptidase from Streptococcus pyogenes serotype M2 (strain MGAS10270).